We begin with the raw amino-acid sequence, 136 residues long: 5-hydroxyisourate hydrolase (136 aa).

The signal sequence occupies residues Met1–Ala20. Residues His31, Arg69, and Tyr133 each contribute to the substrate site.

Belongs to the transthyretin family. 5-hydroxyisourate hydrolase subfamily. As to quaternary structure, homotetramer.

It localises to the periplasm. The enzyme catalyses 5-hydroxyisourate + H2O = 5-hydroxy-2-oxo-4-ureido-2,5-dihydro-1H-imidazole-5-carboxylate + H(+). Functionally, catalyzes the hydrolysis of 5-hydroxyisourate (HIU) to 2-oxo-4-hydroxy-4-carboxy-5-ureidoimidazoline (OHCU). The sequence is that of 5-hydroxyisourate hydrolase (hiuH) from Salmonella typhi.